Reading from the N-terminus, the 866-residue chain is Thiamine diphosphate dependent-3-acetyloctanal synthase PigD (866 aa).

The segment at 826–866 (KGWQRDPSDREALQERKDWAARQPESTSTSFDQGQNKEAIS) is disordered. The span at 828 to 845 (WQRDPSDREALQERKDWA) shows a compositional bias: basic and acidic residues. A compositionally biased stretch (polar residues) spans 849–866 (PESTSTSFDQGQNKEAIS).

Belongs to the TPP enzyme family. Thiamine diphosphate serves as cofactor.

It carries out the reaction (2E)-octenal + pyruvate + H(+) = (S)-3-acetyloctanal + CO2. It functions in the pathway antibiotic biosynthesis; prodigiosin biosynthesis. Its function is as follows. Involved in the biosynthesis of 2-methyl-3-n-amyl-pyrrole (MAP), one of the terminal products involved in the biosynthesis of the red antibiotic prodigiosin (Pig). Catalyzes the decarboxylation of pyruvate, followed by the modification of the resulting two-carbon fragment acetaldehyde at the C3 position of the 2-octenal (1,2-addition of acetaldehyde) giving 3-acetyloctanal. In Serratia sp. (strain ATCC 39006) (Prodigiosinella confusarubida), this protein is Thiamine diphosphate dependent-3-acetyloctanal synthase PigD.